A 382-amino-acid polypeptide reads, in one-letter code: uncharacterized protein (382 aa).

Helical transmembrane passes span 8-28 (VMLL…LNTL), 45-65 (MVSS…GYLI), 75-95 (YLAS…VGFW), 102-122 (FIAG…LMCS), 131-151 (LLAA…LLVS), 157-177 (LLHV…PLLF), 204-224 (LGVN…GLMP), 231-251 (GMAN…GILG), 270-290 (VQVF…AMAP), 291-311 (ALFI…AWAC), 325-345 (ALLL…AMLM), and 349-369 (SDNL…LMLL).

This sequence belongs to the major facilitator superfamily. YcaD (TC 2.A.1.26) family.

Its subcellular location is the cell inner membrane. This is an uncharacterized protein from Salmonella paratyphi B (strain ATCC BAA-1250 / SPB7).